The following is a 156-amino-acid chain: Small ribosomal subunit protein uS7c (156 aa).

It belongs to the universal ribosomal protein uS7 family. In terms of assembly, part of the 30S ribosomal subunit.

It is found in the plastid. The protein localises to the chloroplast. One of the primary rRNA binding proteins, it binds directly to 16S rRNA where it nucleates assembly of the head domain of the 30S subunit. This is Small ribosomal subunit protein uS7c (rps7) from Tupiella akineta (Green alga).